The primary structure comprises 1639 residues: Protein GFS12 (1639 aa).

In terms of domain architecture, Protein kinase 1 spans 206 to 294 (LEEKSKLRCL…IRPSNILLSD (89 aa)). One can recognise a BEACH domain in the interval 336–608 (LKISSHLDWQ…FHGFGVDNKR (273 aa)). The 74-residue stretch at 715–788 (IAGDIFSIGC…AKSLLDSPYF (74 aa)) folds into the Protein kinase 2 domain. WD repeat units follow at residues 1290–1333 (AHHG…CVSS) and 1336–1373 (AHEE…LISL). Low complexity predominate over residues 1377–1398 (SPSDQDQASSDPSSKNNSNPCN). The disordered stretch occupies residues 1377–1399 (SPSDQDQASSDPSSKNNSNPCNR). 3 WD repeats span residues 1465 to 1499 (ALCS…RLFD), 1511 to 1549 (AHDG…TPQP), and 1609 to 1639 (RVKS…RICC).

This sequence belongs to the protein kinase superfamily. Tyr protein kinase family. In terms of assembly, interacts (via protein kinase 2 domain) with BCHC1 (via PH-BEACH domain). In terms of tissue distribution, weakly expressed in the cotyledons of germinating seedlings. Restricted to the vascular tissues of cotyledons. Detected in root tips, apical meristem, young flower buds and receptacles.

Its function is as follows. May act predominantly to suppress BCHC1, which itself is a negative factor in protein storage vacuole (PSV) trafficking regulation and plant effector triggered immunity (ETI). Required for ETI, but not for cell death. This Arabidopsis thaliana (Mouse-ear cress) protein is Protein GFS12.